The chain runs to 124 residues: Seripauperin-23 (124 aa).

Residues 1 to 20 form the signal peptide; that stretch reads MVKLTSIVAGVAAIAAGVAA.

The protein belongs to the SRP1/TIP1 family. Seripauperin subfamily. O-glycosylated.

Its subcellular location is the secreted. It is found in the cell wall. Component of the cell wall. In Saccharomyces cerevisiae (strain ATCC 204508 / S288c) (Baker's yeast), this protein is Seripauperin-23 (PAU23).